Reading from the N-terminus, the 181-residue chain is Malignant T-cell-amplified sequence 1-A (181 aa).

The region spanning 92-171 (LPHQQVDKGA…IGIENIHYLN (80 aa)) is the PUA domain.

The protein belongs to the MCTS1 family.

The protein resides in the cytoplasm. Plays a role as translation enhancer and involved in cell cycle regulation. The protein is Malignant T-cell-amplified sequence 1-A (mcts1-a) of Xenopus laevis (African clawed frog).